The chain runs to 616 residues: Xaa-Pro aminopeptidase app-1 (616 aa).

Residues arginine 78 and histidine 392 each coordinate a peptide. The Zn(2+) site is built by aspartate 413, aspartate 424, and histidine 487. Positions 487, 496, and 522 each coordinate a peptide. Zn(2+) is bound by residues glutamate 522 and glutamate 536.

It belongs to the peptidase M24B family. As to quaternary structure, homodimer. May interact with pid-2, pid-4 and pid-5. Zn(2+) serves as cofactor. As to expression, specifically expressed in the intestine.

Its subcellular location is the cytoplasm. It carries out the reaction Release of any N-terminal amino acid, including proline, that is linked to proline, even from a dipeptide or tripeptide.. Its activity is regulated as follows. Strongly inhibited by the metal ion chelators EDTA and 1,10-phenanthroline. Also inhibited by apstatin. Activity towards bradykinin is inhibited by Mn(2+) and Zn(2+) at all concentrations tested, whereas Co(2+) is inhibitory at concentrations above 100 uM and activatory at 10 uM. Its function is as follows. Catalyzes the removal of a penultimate prolyl residue from the N-termini of peptides, such as Arg-Pro-Pro. Has activity towards the flp-9 neuropeptide KPSFVRF-amide. This is Xaa-Pro aminopeptidase app-1 from Caenorhabditis elegans.